Consider the following 37-residue polypeptide: Disintegrin morulustatin (37 aa).

Cystine bridges form between cysteine 12–cysteine 16, cysteine 22–cysteine 36, and cysteine 24–cysteine 31.

The protein belongs to the venom metalloproteinase (M12B) family. P-II subfamily. P-IIa sub-subfamily. In terms of tissue distribution, expressed by the venom gland.

Its subcellular location is the secreted. Inhibits ADP-induced platelet aggregation in human whole blood in a concentration-dependent manner (IC(50)=89.5 nM). This is Disintegrin morulustatin from Crotalus morulus (Tamaulipan rock rattlesnake).